The chain runs to 244 residues: Sepiapterin reductase (244 aa).

NADP(+) contacts are provided by residues 9-15 (GAGKGIG), 40-42 (SRT), 66-67 (DI), and N93. F99 lines the substrate pocket. Residue T116 coordinates NADP(+). Residues S145 and Y158 each coordinate substrate. Residues Y158, K162, and 191-196 (VYTPMW) contribute to the NADP(+) site. W196 is a binding site for substrate.

It belongs to the short-chain dehydrogenases/reductases (SDR) family. As to quaternary structure, homodimer.

It is found in the cytoplasm. It catalyses the reaction L-threo-7,8-dihydrobiopterin + NADP(+) = L-sepiapterin + NADPH + H(+). The enzyme catalyses L-threo-tetrahydrobiopterin + 2 NADP(+) = 6-pyruvoyl-5,6,7,8-tetrahydropterin + 2 NADPH + 2 H(+). Its activity is regulated as follows. Slightly inhibited by N-acetyldopamine but not by N-acetylserotonin or melatonin. Functionally, catalyzes the final reductions in tetra-hydrobiopterin biosynthesis to form 5,6,7,8-tetrahydrobiopterin. The protein is Sepiapterin reductase of Chlorobaculum tepidum (strain ATCC 49652 / DSM 12025 / NBRC 103806 / TLS) (Chlorobium tepidum).